A 216-amino-acid polypeptide reads, in one-letter code: uncharacterized protein (216 aa).

The helical transmembrane segment at 7–29 threads the bilayer; sequence ILVIFFLIFFIGFEFSDMTLAFI.

The protein localises to the membrane. This is an uncharacterized protein from Archaeoglobus fulgidus (strain ATCC 49558 / DSM 4304 / JCM 9628 / NBRC 100126 / VC-16).